A 126-amino-acid polypeptide reads, in one-letter code: Small ribosomal subunit protein uS12m (126 aa).

Residues methionine 1 to threonine 11 are compositionally biased toward polar residues. Positions methionine 1–lysine 21 are disordered. Residues arginine 12 to lysine 21 are compositionally biased toward basic residues.

This sequence belongs to the universal ribosomal protein uS12 family.

It is found in the mitochondrion. Protein S12 is involved in the translation initiation step. The sequence is that of Small ribosomal subunit protein uS12m (RPS12) from Bigelowiella natans (Pedinomonas minutissima).